The following is a 201-amino-acid chain: MARYTGPRTRIARKFGEAIFGADKVLSKKNYPPGQHGNSRKRKTSEYGIQLREKQKAKYTYGVLEKQFRNLFEKASRSKGITGEVLLQLLEGRLDNVVYRLGIAPTRAAARQLVSHRHITVDGSVVNIPSYSVKPGQVIGVREKSKSMEVIADALSGFNHSQYPWIEWDQSSMSGKLLHLPERADIPENIKEQLIVELYSK.

Positions 27–47 (SKKNYPPGQHGNSRKRKTSEY) are disordered. The S4 RNA-binding domain occupies 92 to 152 (GRLDNVVYRL…EKSKSMEVIA (61 aa)).

This sequence belongs to the universal ribosomal protein uS4 family. In terms of assembly, part of the 30S ribosomal subunit. Contacts protein S5. The interaction surface between S4 and S5 is involved in control of translational fidelity.

In terms of biological role, one of the primary rRNA binding proteins, it binds directly to 16S rRNA where it nucleates assembly of the body of the 30S subunit. With S5 and S12 plays an important role in translational accuracy. The chain is Small ribosomal subunit protein uS4 from Parabacteroides distasonis (strain ATCC 8503 / DSM 20701 / CIP 104284 / JCM 5825 / NCTC 11152).